The chain runs to 222 residues: Glutathione S-transferase alpha-4 (222 aa).

M1 bears the N-acetylmethionine mark. The 81-residue stretch at 3-83 folds into the GST N-terminal domain; it reads VKPKLYYFQG…YLAAKYNLYG (81 aa). Residues Y9, 54 to 55, and 67 to 68 contribute to the glutathione site; these read QV and QT. In terms of domain architecture, GST C-terminal spans 85–208; it reads DLKERVRIDM…QPGSQRKPPP (124 aa).

Belongs to the GST superfamily. Alpha family. As to quaternary structure, homodimer.

It is found in the cytoplasm. The enzyme catalyses RX + glutathione = an S-substituted glutathione + a halide anion + H(+). Functionally, conjugation of reduced glutathione to a wide number of exogenous and endogenous hydrophobic electrophiles. The protein is Glutathione S-transferase alpha-4 (Gsta4) of Rattus norvegicus (Rat).